The sequence spans 29 residues: Cyclotide psyleio C (29 aa).

A cross-link (cyclopeptide (Gly-Arg)) is located at residues 1-29 (GDLPVCGETCFGGTCNTPGCVCAWPVCTR). Intrachain disulfides connect cysteine 6–cysteine 20, cysteine 10–cysteine 22, and cysteine 15–cysteine 27.

In terms of processing, this is a cyclic peptide.

Probably participates in a plant defense mechanism. This chain is Cyclotide psyleio C, found in Psychotria leiocarpa.